The chain runs to 185 residues: ATP-dependent protease subunit HslV (185 aa).

Thr-12 is an active-site residue. Positions 168, 171, and 174 each coordinate Na(+).

It belongs to the peptidase T1B family. HslV subfamily. In terms of assembly, a double ring-shaped homohexamer of HslV is capped on each side by a ring-shaped HslU homohexamer. The assembly of the HslU/HslV complex is dependent on binding of ATP.

Its subcellular location is the cytoplasm. It carries out the reaction ATP-dependent cleavage of peptide bonds with broad specificity.. With respect to regulation, allosterically activated by HslU binding. Protease subunit of a proteasome-like degradation complex believed to be a general protein degrading machinery. This Dinoroseobacter shibae (strain DSM 16493 / NCIMB 14021 / DFL 12) protein is ATP-dependent protease subunit HslV.